The following is a 236-amino-acid chain: SERTA domain-containing protein 1 (236 aa).

Positions 1 to 20 are disordered; the sequence is MLSKGLKRKREEEEEKEPLA. Residues 38-85 form the SERTA domain; that stretch reads PAVASSSLFDLSVLKLHHSLQQSEPDLRHLVLVVNTLRRIQASMAPAA. Residues 189–211 are disordered; that stretch reads PASEGLKPGPEDGPGKEEAPELD. Over residues 197-207 the composition is skewed to basic and acidic residues; sequence GPEDGPGKEEA.

Interacts with the PHD-bromodomain of TIF1, TRIM28/TIF1B and p300/CBP. Interacts with E2F1 and TFDP1; modulates transactivation activity of TFDP1/E2F complexes. Also interacts with CDK4. Post-translationally, polyubiquitinated, which promotes proteasomal degradation.

Acts at E2F-responsive promoters as coregulator to integrate signals provided by PHD- and/or bromodomain-containing transcription factors. Stimulates E2F1/TFDP1 transcriptional activity. Renders the activity of cyclin D1/CDK4 resistant to the inhibitory effects of CDKN2A/p16INK4A. The protein is SERTA domain-containing protein 1 (SERTAD1) of Homo sapiens (Human).